Consider the following 214-residue polypeptide: uncharacterized protein (214 aa).

2 helical membrane-spanning segments follow: residues 23–43 and 65–85; these read ILVGACAAVWLVFTGVSVAAA and VLYAVIVVSALVIVGAIPVLL. The interval 96-115 is disordered; it reads ATRPTGASVRGGRSIGSGHP. 2 helical membrane passes run 152-172 and 181-201; these read VVLTSAIGIALIAVAAATYLM and WISYGLAGVVTAGMPVIEWLY.

Its subcellular location is the cell membrane. This is an uncharacterized protein from Mycobacterium tuberculosis (strain CDC 1551 / Oshkosh).